Here is a 456-residue protein sequence, read N- to C-terminus: Adenylosuccinate lyase (456 aa).

Residues 15–16 (RY), 90–92 (NHD), and 122–123 (TS) each bind N(6)-(1,2-dicarboxyethyl)-AMP. The active-site Proton donor/acceptor is His171. A N(6)-(1,2-dicarboxyethyl)-AMP-binding site is contributed by Gln248. Ser296 functions as the Proton donor/acceptor in the catalytic mechanism. N(6)-(1,2-dicarboxyethyl)-AMP is bound by residues Ser297, 302 to 304 (KVN), Asn310, Arg336, and 341 to 345 (STVLR).

It belongs to the lyase 1 family. Adenylosuccinate lyase subfamily. Homotetramer.

The enzyme catalyses N(6)-(1,2-dicarboxyethyl)-AMP = fumarate + AMP. The catalysed reaction is (2S)-2-[5-amino-1-(5-phospho-beta-D-ribosyl)imidazole-4-carboxamido]succinate = 5-amino-1-(5-phospho-beta-D-ribosyl)imidazole-4-carboxamide + fumarate. It catalyses the reaction (2S)-2-amino-2'-deoxyadenylo-succinate = dZMP + fumarate. Its pathway is purine metabolism; AMP biosynthesis via de novo pathway; AMP from IMP: step 2/2. It functions in the pathway purine metabolism; IMP biosynthesis via de novo pathway; 5-amino-1-(5-phospho-D-ribosyl)imidazole-4-carboxamide from 5-amino-1-(5-phospho-D-ribosyl)imidazole-4-carboxylate: step 2/2. The protein operates within purine metabolism. Catalyzes two reactions in de novo purine nucleotide biosynthesis. Catalyzes the breakdown of 5-aminoimidazole- (N-succinylocarboxamide) ribotide (SAICAR or 2-[5-amino-1-(5-phospho-beta-D-ribosyl)imidazole-4-carboxamido]succinate) to 5-aminoimidazole-4-carboxamide ribotide (AICAR or 5-amino-1-(5-phospho-beta-D-ribosyl)imidazole-4-carboxamide) and fumarate, and of adenylosuccinate (ADS or N(6)-(1,2-dicarboxyethyl)-AMP) to adenosine monophosphate (AMP) and fumarate. In terms of biological role, (Microbial infection) Catalyzes the conversion of 2-amino-2'-deoxyadenylo-succinate to dZMP and fumarate, when the bacterium is infected by a phage that produces the substrate of this reaction, a step in the synthesis of dZTP (2-amino-2'-deoxyadenosine 5'-triphosphate), which is a nucleotide then used by the phage as a DNA polymerase substrate. This is Adenylosuccinate lyase from Vibrio cholerae serotype O1 (strain ATCC 39541 / Classical Ogawa 395 / O395).